The primary structure comprises 247 residues: Mast cell protease 2 (247 aa).

An N-terminal signal peptide occupies residues 1 to 18 (MQALLFLMALLLPSGAGA). A propeptide spans 19 to 20 (EE) (activation peptide). A Peptidase S1 domain is found at 21-244 (IIGGVESIPH…YVPWINAVIN (224 aa)). Residues Cys-50 and Cys-66 are joined by a disulfide bond. Active-site charge relay system residues include His-65 and Asp-109. Cystine bridges form between Cys-143-Cys-208 and Cys-174-Cys-187. Ser-202 (charge relay system) is an active-site residue.

Belongs to the peptidase S1 family. Granzyme subfamily.

This enzyme, isolated from small intestine, specifically inactivates the apo forms of a certain group of intracellular pyridoxal phosphate-requiring enzymes. It has chymotrypsin-like specificity towards small substrates. The sequence is that of Mast cell protease 2 (Mcpt2) from Rattus norvegicus (Rat).